We begin with the raw amino-acid sequence, 287 residues long: MRTLAIDIGGTKIALAIVEEGTIIQRYQIATPVVQDVTKFVQAILEKVTEWLPSIDYVGVSTTGYVTPEGITSINPETLNFPVPFPLAQTLEQLTNKPVSILNDAQAAAWFEFVQLKNPSLNMAFITVSTGVGGGIIIDGKLHKGNSGLAGHIGHMSVAIEGPLCGCGQRGCVESMASGNAIQKESEATFTETMSNVELFKQAAFNPKAEAIINRSVQAVATLCCNLKACLDLDIIVLGGGIGLAEGYLERLNKAIQSRPSVFHIPVTPAHGDYDACLLGAAFQFKE.

Residues 5 to 12 (AIDIGGTK) and 131 to 138 (GVGGGIII) contribute to the ATP site. Zn(2+)-binding residues include H155, C165, C167, and C172.

It belongs to the ROK (NagC/XylR) family. NanK subfamily. In terms of assembly, homodimer.

It catalyses the reaction an N-acyl-D-mannosamine + ATP = an N-acyl-D-mannosamine 6-phosphate + ADP + H(+). It participates in amino-sugar metabolism; N-acetylneuraminate degradation; D-fructose 6-phosphate from N-acetylneuraminate: step 2/5. In terms of biological role, catalyzes the phosphorylation of N-acetylmannosamine (ManNAc) to ManNAc-6-P. In Vibrio cholerae serotype O1 (strain ATCC 39541 / Classical Ogawa 395 / O395), this protein is N-acetylmannosamine kinase.